The chain runs to 350 residues: MQRSLDSLAGMATSAFGAGTSAAMRQATSPKTILEYIINFFTCGGIRRRNETQYQELIETMAETLKSTMPDRGAPLPENIILDDMDGCRVEFNLPGENNEAGQVIVRVSKGDHSETREIPLVSFEKICRALLFRCEFSLPQDSVILTAQGGMNLKGAVLTGANLTAENLCDADLSGANLEGAVLFMADCEGANFKGANLSGTSLGDSNFKNACLEDSIMCGATLDHANLTGANLQHASLLGCSMIECNCSGANMDHTNLSGATLIRADMSGATLQGATIMAAIMEDAVLTRANLRKASFISTNLDGADLAEANLNNTCFKDCTLTHLRTEDATMSTSTQTLFNEFYSENI.

4 Pentapeptide repeat domains span residues Ala-162–Gly-201, Thr-202–Gly-241, Cys-247–Asp-286, and Ala-287–His-326.

Interacts with the host kinesin light chain (KLC), a subunit of the kinesin-1 motor complex.

The protein resides in the secreted. It is found in the host membrane. Functionally, effector proteins function to alter host cell physiology and promote bacterial survival in host tissues. Involved in the reorganization of late endosome/lysosome (LE/Lys) compartments in mammalian cells. Necessary and sufficient to link kinesin-1 onto the Salmonella-containing vacuole (SCV) membrane. Required for centrifugal extension of lysosomal glycoprotein-rich membrane tubules, known as Salmonella-induced filaments (Sifs), away from the SCV and toward the cell periphery. Required for virulence, but not for intracellular survival and replication in phagocytic cells. The protein is Secreted effector protein PipB2 (pipB2) of Salmonella choleraesuis (strain SC-B67).